Reading from the N-terminus, the 363-residue chain is MKTLEVKTSSATYPVYIGDGIKRNIVDLMTSTGHSYTKLLIVTDTAVDAIYGDEMVRLLEQKWSVHKVVVPSGEQSKSFAEFEHIHTKAIQFQLDRSSCIIALGGGVIGDLAGFVAASYMRGIDFIQVPTTLLAHDSAVGGKTGINHPLGKNLIGAFHQPKAVIYDTSMLETLSQTEMRSGFAEVIKHALISSEDFLKELMSIRSLDECSKSELAHMLYQGIEVKASIVQKDEREQGVRAFLNLGHTLGHAIEAEYGYGVITHGDAIAIGMQFALYVSEKKLGLSLHRTELKEWMKKLGFPVQVTQDISTKTFVDRMIGDKKARGGTVQFVLLKQVGDAVLQSFTKDDLHQWLDEWKREEGCL.

NAD(+) is bound by residues 72–77 (SGEQSK), 106–110 (GVIGD), 130–131 (TT), Lys-142, and Lys-151. Zn(2+) contacts are provided by Glu-184, His-246, and His-263.

Belongs to the sugar phosphate cyclases superfamily. Dehydroquinate synthase family. Co(2+) is required as a cofactor. The cofactor is Zn(2+). Requires NAD(+) as cofactor.

It is found in the cytoplasm. The catalysed reaction is 7-phospho-2-dehydro-3-deoxy-D-arabino-heptonate = 3-dehydroquinate + phosphate. Its pathway is metabolic intermediate biosynthesis; chorismate biosynthesis; chorismate from D-erythrose 4-phosphate and phosphoenolpyruvate: step 2/7. Its function is as follows. Catalyzes the conversion of 3-deoxy-D-arabino-heptulosonate 7-phosphate (DAHP) to dehydroquinate (DHQ). This Bacillus pumilus (strain SAFR-032) protein is 3-dehydroquinate synthase.